Here is a 511-residue protein sequence, read N- to C-terminus: 2-isopropylmalate synthase (511 aa).

Positions 6 to 269 (IIIFDTTLRD…YTDIKCENIF (264 aa)) constitute a Pyruvate carboxyltransferase domain. Mn(2+)-binding residues include Asp-15, His-203, His-205, and Asn-239. Residues 394 to 511 (VIEKLSVISG…SLKVEERKMA (118 aa)) are regulatory domain.

Belongs to the alpha-IPM synthase/homocitrate synthase family. LeuA type 1 subfamily. Homodimer. It depends on Mn(2+) as a cofactor.

The protein localises to the cytoplasm. It carries out the reaction 3-methyl-2-oxobutanoate + acetyl-CoA + H2O = (2S)-2-isopropylmalate + CoA + H(+). The protein operates within amino-acid biosynthesis; L-leucine biosynthesis; L-leucine from 3-methyl-2-oxobutanoate: step 1/4. Catalyzes the condensation of the acetyl group of acetyl-CoA with 3-methyl-2-oxobutanoate (2-ketoisovalerate) to form 3-carboxy-3-hydroxy-4-methylpentanoate (2-isopropylmalate). The sequence is that of 2-isopropylmalate synthase from Campylobacter jejuni subsp. jejuni serotype O:23/36 (strain 81-176).